Here is a 1263-residue protein sequence, read N- to C-terminus: DNA-directed RNA polymerase subunit beta (1263 aa).

This sequence belongs to the RNA polymerase beta chain family. In terms of assembly, the RNAP catalytic core consists of 2 alpha, 1 beta, 1 beta' and 1 omega subunit. When a sigma factor is associated with the core the holoenzyme is formed, which can initiate transcription.

It carries out the reaction RNA(n) + a ribonucleoside 5'-triphosphate = RNA(n+1) + diphosphate. In terms of biological role, DNA-dependent RNA polymerase catalyzes the transcription of DNA into RNA using the four ribonucleoside triphosphates as substrates. The polypeptide is DNA-directed RNA polymerase subunit beta (Thermotoga petrophila (strain ATCC BAA-488 / DSM 13995 / JCM 10881 / RKU-1)).